An 84-amino-acid polypeptide reads, in one-letter code: Envelope glycoprotein N (84 aa).

The first 26 residues, 1–26 (MSCKKGARQRLYVSLWLFYILVFAAA), serve as a signal peptide directing secretion. At 27-45 (TEMDFYSSECHSHTYEIVL) the chain is on the virion surface side. The chain crosses the membrane as a helical span at residues 46–66 (NSFSSIWLLINLFLLLCSFAI). At 67 to 84 (FLKYWCYKTFASETVKGY) the chain is on the intravirion side.

It belongs to the herpesviridae glycoprotein N family. Interacts (via N-terminus) with gM (via N-terminus). The gM-gN heterodimer forms the gCII complex.

Its subcellular location is the virion membrane. It localises to the host membrane. The protein resides in the host Golgi apparatus. It is found in the host trans-Golgi network. Functionally, envelope glycoprotein necessary for proper maturation of gM and modulation of its membrane fusion activity. Also plays a critical role in virion morphogenesis. This is Envelope glycoprotein N from Human herpesvirus 6B (strain Z29) (HHV-6 variant B).